The following is a 196-amino-acid chain: Xanthine phosphoribosyltransferase (196 aa).

2 residues coordinate xanthine: L20 and N27. A 5-phospho-alpha-D-ribose 1-diphosphate-binding site is contributed by 128 to 132 (ATGAA). K156 is a xanthine binding site.

The protein belongs to the purine/pyrimidine phosphoribosyltransferase family. Xpt subfamily. Homodimer.

It is found in the cytoplasm. It carries out the reaction XMP + diphosphate = xanthine + 5-phospho-alpha-D-ribose 1-diphosphate. It participates in purine metabolism; XMP biosynthesis via salvage pathway; XMP from xanthine: step 1/1. Functionally, converts the preformed base xanthine, a product of nucleic acid breakdown, to xanthosine 5'-monophosphate (XMP), so it can be reused for RNA or DNA synthesis. This chain is Xanthine phosphoribosyltransferase, found in Brevibacillus brevis (strain 47 / JCM 6285 / NBRC 100599).